We begin with the raw amino-acid sequence, 83 residues long: Bublin coiled-coil protein (83 aa).

Residues 1–24 (MSGPNGDLGMPVEAGAEGEEDGFG) form a disordered region. Positions 25–74 (EAEYAAINSMLDQINSCLDHLEEKNDHLHARLQELLESNRQTRLEFQQQL) form a coiled coil. Residue S82 is modified to Phosphoserine.

It belongs to the UPF0184 (EST00098) family.

Its subcellular location is the cell junction. The protein resides in the cytoplasm. The protein localises to the cytoskeleton. Functionally, essential for intermediate filament organization in intestinal cells, interacts with intermediate filament and regulates intestinal lumen morphology. The sequence is that of Bublin coiled-coil protein from Homo sapiens (Human).